The primary structure comprises 306 residues: MPSNGDLDRQIEQLMECKPLSEADVRTLCDQARAILVEEYNVQPVKCPVTVCGDIHGQFYDLIELFRIGGNAPDTNYLFMGDYVDRGYYSVETVSLLVALKVRYRDRLTILRGNHESRQITQVYGFYDECLRKYGNANVWKYFTDLFDYLPLTALIESQVFCLHGGLSPSLDTLDNIRSLDRIQEVPHEGPMCDLLWSDPDDRCGWGISPRGAGYTFGQDIAAQFNHNNGLSLISRAHQLVMEGFNWCQDKNVVTVFSAPNYCYRCGNMAAILEIGENMEQNFLQFDPAPRQVEPDTTRKTPDYFL.

Residues Asp-54, His-56, Asp-82, and Asn-114 each coordinate Mn(2+). Catalysis depends on His-115, which acts as the Proton donor. Mn(2+) contacts are provided by His-164 and His-238. Leu-306 carries the post-translational modification Leucine methyl ester.

Belongs to the PPP phosphatase family. PP-2A subfamily. PP2A consists of a common heterodimeric core enzyme, composed of a 36 kDa catalytic subunit (subunit C) and a 65 kDa constant regulatory subunit (subunit A), that associates with a variety of regulatory subunits such as subunits B (the R2/B/PR55/B55, R3/B''/PR72/PR130/PR59 and R5/B'/B56 families). Interacts with B'THETA. Interacts with HDA14. Interacts with SRK2E/OST1. Interacts with TAP46. Mn(2+) serves as cofactor. Reversibly methyl esterified on Leu-306 by leucine carboxyl methyltransferase 1 (LCMT1) and pectin methylesterase 1 (PME1). Carboxyl methylation influences the affinity of the catalytic subunit for the different regulatory subunits, thereby modulating the PP2A holoenzyme's substrate specificity, enzyme activity and cellular localization. Post-translationally, phosphorylation of either threonine (by autophosphorylation-activated protein kinase) or tyrosine results in inactivation of the phosphatase. Auto-dephosphorylation has been suggested as a mechanism for reactivation. As to expression, expressed in root meristem, emerging lateral roots, leaf vasculature, stipules, guard cells, anthers and pollen grains.

The protein localises to the cytoplasm. It localises to the cytosol. The protein resides in the nucleus. It is found in the peroxisome. The enzyme catalyses O-phospho-L-seryl-[protein] + H2O = L-seryl-[protein] + phosphate. The catalysed reaction is O-phospho-L-threonyl-[protein] + H2O = L-threonyl-[protein] + phosphate. Functionally, dephosphorylates and activates the actin-depolymerizing factor ADF1, which, in turn, regulates actin cytoskeleton remodeling and is involved in the blue light photoreceptor PHOT2-mediated chloroplast avoidance movements. Associates with the serine/threonine-protein phosphatase PP2A regulatory subunits A and B' to positively regulates beta-oxidation of fatty acids and protoauxins in peroxisomes by dephosphorylating peroxisomal beta-oxidation-related proteins. Acts as a negative regulator of abscisic acid (ABA) signaling. May regulate ABA-dependent gene expression. Involved in the light-dependent activation of nitrate reductase. The protein is Serine/threonine-protein phosphatase PP2A-2 catalytic subunit of Arabidopsis thaliana (Mouse-ear cress).